The chain runs to 340 residues: Glycerol-3-phosphate dehydrogenase [NAD(P)+] (340 aa).

NADPH-binding residues include Ser-14, Phe-15, Arg-35, and Lys-109. 2 residues coordinate sn-glycerol 3-phosphate: Lys-109 and Gly-137. Position 141 (Ala-141) interacts with NADPH. 5 residues coordinate sn-glycerol 3-phosphate: Lys-192, Asp-245, Ser-255, Arg-256, and Asn-257. Catalysis depends on Lys-192, which acts as the Proton acceptor. Position 256 (Arg-256) interacts with NADPH. NADPH contacts are provided by Val-280 and Glu-282.

This sequence belongs to the NAD-dependent glycerol-3-phosphate dehydrogenase family.

It localises to the cytoplasm. It carries out the reaction sn-glycerol 3-phosphate + NAD(+) = dihydroxyacetone phosphate + NADH + H(+). It catalyses the reaction sn-glycerol 3-phosphate + NADP(+) = dihydroxyacetone phosphate + NADPH + H(+). The protein operates within membrane lipid metabolism; glycerophospholipid metabolism. Functionally, catalyzes the reduction of the glycolytic intermediate dihydroxyacetone phosphate (DHAP) to sn-glycerol 3-phosphate (G3P), the key precursor for phospholipid synthesis. The sequence is that of Glycerol-3-phosphate dehydrogenase [NAD(P)+] from Teredinibacter turnerae (strain ATCC 39867 / T7901).